The primary structure comprises 280 residues: Urease accessory protein UreD (280 aa).

Belongs to the UreD family. As to quaternary structure, ureD, UreF and UreG form a complex that acts as a GTP-hydrolysis-dependent molecular chaperone, activating the urease apoprotein by helping to assemble the nickel containing metallocenter of UreC. The UreE protein probably delivers the nickel.

Its subcellular location is the cytoplasm. Functionally, required for maturation of urease via the functional incorporation of the urease nickel metallocenter. This chain is Urease accessory protein UreD, found in Staphylococcus saprophyticus subsp. saprophyticus (strain ATCC 15305 / DSM 20229 / NCIMB 8711 / NCTC 7292 / S-41).